Reading from the N-terminus, the 186-residue chain is MTGRCILQIALLVCFFTTAHSVSYKLLGFQLRSSSLECQELLVNLNRTSKYCLKDRMNFEVPEEIKKSQRFQKEEAILVINEMFQKIFNIFSRSTSSTGWNETTVENLLATLHWQKEHLETILEEIMEEENFTWDNTTLLNLKKYYLRIVRYLKAKEYSVCAWTVVHAEILRNFFFLERLTDYLQN.

Residues 1 to 21 (MTGRCILQIALLVCFFTTAHS) form the signal peptide. Tyrosine 24 carries the post-translational modification Phosphotyrosine. Asparagine 46, asparagine 101, asparagine 131, and asparagine 136 each carry an N-linked (GlcNAc...) asparagine glycan. A disulfide bridge links cysteine 52 with cysteine 161.

Belongs to the alpha/beta interferon family. In terms of assembly, monomer.

The protein resides in the secreted. In terms of biological role, type I interferon cytokine that plays a key role in the innate immune response to infection, developing tumors and other inflammatory stimuli. Signals via binding to high-affinity (IFNAR2) and low-affinity (IFNAR1) heterodimeric receptor, activating the canonical Jak-STAT signaling pathway resulting in transcriptional activation or repression of interferon-regulated genes that encode the effectors of the interferon response, such as antiviral proteins, regulators of cell proliferation and differentiation, and immunoregulatory proteins. Signals mostly via binding to a IFNAR1-IFNAR2 heterodimeric receptor, but can also function with IFNAR1 alone and independently of Jak-STAT pathways. Elicits a wide variety of responses, including antiviral and antibacterial activities, and can regulate the development of B-cells, myelopoiesis and lipopolysaccharide (LPS)-inducible production of tumor necrosis factor. Plays a role in neuronal homeostasis by regulating dopamine turnover and protecting dopaminergic neurons: acts by promoting neuronal autophagy and alpha-synuclein clearance, thereby preventing dopaminergic neuron loss. IFNB1 is more potent than interferon-alpha (IFN-alpha) in inducing the apoptotic and antiproliferative pathways required for control of tumor cell growth. In Felis catus (Cat), this protein is Interferon beta (IFNB1).